The primary structure comprises 225 residues: Small ribosomal subunit protein uS3 (225 aa).

The region spanning 38-106 is the KH type-2 domain; sequence IRRFLQKKFK…PIGMNIIEVK (69 aa).

This sequence belongs to the universal ribosomal protein uS3 family. In terms of assembly, part of the 30S ribosomal subunit. Forms a tight complex with proteins S10 and S14.

Functionally, binds the lower part of the 30S subunit head. Binds mRNA in the 70S ribosome, positioning it for translation. This Leptospira biflexa serovar Patoc (strain Patoc 1 / Ames) protein is Small ribosomal subunit protein uS3.